Reading from the N-terminus, the 92-residue chain is Acylphosphatase (92 aa).

One can recognise an Acylphosphatase-like domain in the interval 3 to 90 (RVHVLVAGRV…GEFTEFAVLR (88 aa)). Residues R18 and N36 contribute to the active site.

This sequence belongs to the acylphosphatase family.

The catalysed reaction is an acyl phosphate + H2O = a carboxylate + phosphate + H(+). The sequence is that of Acylphosphatase (acyP) from Methylococcus capsulatus (strain ATCC 33009 / NCIMB 11132 / Bath).